The primary structure comprises 478 residues: Putative L-amino-acid oxidase YobN (478 aa).

Residues S34, E53, R61, and 80 to 81 (MR) each bind FAD. The substrate site is built by R81 and Y369. FAD is bound by residues E451 and 460-463 (MQGA).

This sequence belongs to the flavin monoamine oxidase family. FIG1 subfamily. Requires FAD as cofactor.

It carries out the reaction an L-alpha-amino acid + O2 + H2O = a 2-oxocarboxylate + H2O2 + NH4(+). The protein is Putative L-amino-acid oxidase YobN (yobN) of Bacillus subtilis (strain 168).